The primary structure comprises 298 residues: Glycine--tRNA ligase alpha subunit (298 aa).

This sequence belongs to the class-II aminoacyl-tRNA synthetase family. As to quaternary structure, tetramer of two alpha and two beta subunits.

The protein resides in the cytoplasm. It carries out the reaction tRNA(Gly) + glycine + ATP = glycyl-tRNA(Gly) + AMP + diphosphate. The polypeptide is Glycine--tRNA ligase alpha subunit (glyQ) (Helicobacter pylori (strain J99 / ATCC 700824) (Campylobacter pylori J99)).